The chain runs to 497 residues: MAFLLYYTLFISFMLWLAALLIISFSVYGSPEKVKLIKKTSLFFSFFQFILIIFFWILSDNISVLAEFDIYNFQFYKQWLFLYNFHYVIGMDNISLLFLLLTFFLTPICILISWNSIKYRYNSFIICLIFITFILFNIFCVLDLVFFYIFFESILIPMFILIGVWGSRQRKIHAVYQLFFYTLLGSLLMLLGILVIYSHIQTTDIRVLYNTNFSFYRQLILWASFFFAFCVKVPLFPFHIWLPEAHVEAPTVGSVILAGVLLKLGTYGLLRFVIPIFCDATYFFLPLVYTLCLLGIIYTCCSTIRQVDLKKVIAYASVSHMSFVILGLFTSNIQGIGGSVFLMLSHGIVSSGLFFCIGCVYDRYKTRILRYYSGLVSTMPIFSLCLFILILSNISFPGTSSFIGEFLILLGLFENNHFAALIATFSIILTAVYSIWLYNRIIFNRLVVNYYLRFSDFSKKEFVVGFIFCFITILFGLKGSYIISLIEAPLYVYLSFK.

The next 14 membrane-spanning stretches (helical) occupy residues 3 to 23 (FLLY…LLII), 42 to 62 (LFFS…SDNI), 94 to 114 (ISLL…LISW), 122 to 142 (NSFI…FCVL), 144 to 164 (LVFF…LIGV), 178 to 198 (LFFY…VIYS), 220 to 240 (ILWA…PFHI), 250 to 270 (PTVG…YGLL), 276 to 296 (IFCD…LLGI), 313 to 333 (IAYA…TSNI), 340 to 360 (VFLM…IGCV), 374 to 394 (GLVS…LSNI), 418 to 438 (FAAL…IWLY), and 463 to 483 (VVGF…SYII).

The protein belongs to the complex I subunit 4 family.

Its subcellular location is the mitochondrion membrane. It carries out the reaction a ubiquinone + NADH + 5 H(+)(in) = a ubiquinol + NAD(+) + 4 H(+)(out). Its function is as follows. Core subunit of the mitochondrial membrane respiratory chain NADH dehydrogenase (Complex I) that is believed to belong to the minimal assembly required for catalysis. Complex I functions in the transfer of electrons from NADH to the respiratory chain. The immediate electron acceptor for the enzyme is believed to be ubiquinone. The polypeptide is NADH-ubiquinone oxidoreductase chain 4 (ND4) (Acanthamoeba castellanii (Amoeba)).